The sequence spans 220 residues: Small ribosomal subunit protein uS3c (220 aa).

Residues Ile39–Thr120 enclose the KH type-2 domain.

This sequence belongs to the universal ribosomal protein uS3 family. In terms of assembly, part of the 30S ribosomal subunit.

It localises to the plastid. This is Small ribosomal subunit protein uS3c (rps3) from Epifagus virginiana (Beechdrops).